The chain runs to 274 residues: Diaminopimelate epimerase (274 aa).

Asparagine 11, glutamine 44, and asparagine 64 together coordinate substrate. The active-site Proton donor is the cysteine 73. Residues 74–75 (GN), asparagine 157, asparagine 190, and 208–209 (ER) contribute to the substrate site. Cysteine 217 (proton acceptor) is an active-site residue. Substrate is bound at residue 218 to 219 (GS).

This sequence belongs to the diaminopimelate epimerase family. As to quaternary structure, homodimer (Potential). Previously DapF has been proposed to be a monomer, however it seems that it adopts a dimeric structure.

Its subcellular location is the cytoplasm. It carries out the reaction (2S,6S)-2,6-diaminopimelate = meso-2,6-diaminopimelate. It functions in the pathway amino-acid biosynthesis; L-lysine biosynthesis via DAP pathway; DL-2,6-diaminopimelate from LL-2,6-diaminopimelate: step 1/1. With respect to regulation, inhibited by LL-aziridino (LL-AziDAP), DL-aziridino (DL-AziDAP). Also inhibited by (2S,3R,6S)-2,6-diamino-3-fluoropimelate (L,L-3-fluoro-DAP) and (2R,3S,6S)-2,6-diamino-3-fluoropimelate (D,L-3-fluoro-DAP). Functionally, catalyzes the stereoinversion of LL-2,6-diaminopimelate (L,L-DAP) to meso-diaminopimelate (meso-DAP), a precursor of L-lysine and an essential component of the bacterial peptidoglycan. Only accepts DAP isomers with the L configuration. The polypeptide is Diaminopimelate epimerase (Haemophilus influenzae (strain ATCC 51907 / DSM 11121 / KW20 / Rd)).